A 222-amino-acid polypeptide reads, in one-letter code: Large ribosomal subunit protein uL1 (222 aa).

It belongs to the universal ribosomal protein uL1 family. Part of the 50S ribosomal subunit.

Binds directly to 23S rRNA. Probably involved in E site tRNA release. In terms of biological role, protein L1 is also a translational repressor protein, it controls the translation of its operon by binding to its mRNA. The polypeptide is Large ribosomal subunit protein uL1 (Pyrobaculum calidifontis (strain DSM 21063 / JCM 11548 / VA1)).